Reading from the N-terminus, the 298-residue chain is Probable endonuclease 4 (298 aa).

Positions 69, 110, 145, 179, 182, 214, 227, 229, and 259 each coordinate Zn(2+).

The protein belongs to the AP endonuclease 2 family. It depends on Zn(2+) as a cofactor.

It carries out the reaction Endonucleolytic cleavage to 5'-phosphooligonucleotide end-products.. Functionally, endonuclease IV plays a role in DNA repair. It cleaves phosphodiester bonds at apurinic or apyrimidinic (AP) sites, generating a 3'-hydroxyl group and a 5'-terminal sugar phosphate. The protein is Probable endonuclease 4 of Geobacillus sp. (strain WCH70).